The following is a 386-amino-acid chain: MLRMKKICTAFLTIALCTHVLAHDDTEMKDPNRVSQEQRERKVEYGTYTVPPRNQDNGMFRLKRDVDPPCTNCVITVMSANLEYSNGTTADAENGMWLHHILFYNKANRDDICGEKKPGQRFFGSGNDRTPLDLTDGGKNKLGYHIGHNDQFFISVELMNMHFSSQDVVLTAHWKFVEEPYSEYELGTPYWFDVASCGRSDVPATNNAIFNFISPPVRLDFHGQLAYLSNHVHDGAYLHEVKKNGKIICSVNPQYSSDDGADGIVHLSHVPPCSNAGPVAPGDEVSLTASYDTTKYAPMINEDGTLEPVMGVTLAYIVKGTAPVASDSGGRFYFVVPIAAIAFIALTIGAGYVFYSARQKKEWPKWLSRRQKYQSVGTEDEAFLAR.

Residues 1–22 form the signal peptide; it reads MLRMKKICTAFLTIALCTHVLA. The N-linked (GlcNAc...) asparagine glycan is linked to Asn-86. Residues 334 to 354 traverse the membrane as a helical segment; the sequence is FVVPIAAIAFIALTIGAGYVF.

This sequence belongs to the clz3 oxygenase family.

It localises to the membrane. Its pathway is secondary metabolite biosynthesis. Functionally, probable copper-dependent oxygenase; part of the gene cluster that mediates the biosynthesis of squalestatin S1 (SQS1, also known as zaragozic acid A), a heavily oxidized fungal polyketide that offers potent cholesterol lowering activity by targeting squalene synthase (SS). SQS1 is composed of a 2,8-dioxobicyclic[3.2.1]octane-3,4,5-tricarboxyclic acid core that is connected to two lipophilic polyketide arms. These initial steps feature the priming of an unusual benzoic acid starter unit onto the highly reducing polyketide synthase pks2, followed by oxaloacetate extension and product release to generate a tricarboxylic acid containing product. The phenylalanine ammonia lyase (PAL) M7 and the acyl-CoA ligase M9 are involved in transforming phenylalanine into benzoyl-CoA. The citrate synthase-like protein R3 is involved in connecting the C-alpha-carbons of the hexaketide chain and oxaloacetate to afford the tricarboxylic acid unit. The potential hydrolytic enzymes, M8 and M10, are in close proximity to pks2 and may participate in product release. On the other side, the tetraketide arm is synthesized by a the squalestatin tetraketide synthase pks1 and enzymatically esterified to the core in the last biosynthetic step, by the acetyltransferase M4. The biosynthesis of the tetraketide must involve 3 rounds of chain extension. After the first and second rounds methyl-transfer occurs, and in all rounds of extension the ketoreductase and dehydratase are active. The enoyl reductase and C-MeT of pks1 are not active in the final round of extension. The acetyltransferase M4 appears to have a broad substrate selectivity for its acyl CoA substrate, allowing the in vitro synthesis of novel squalestatins. The biosynthesis of SQS1 requires several oxidative steps likely performed by oxidoreductases M1, R1 and R2. Finally, in support of the identification of the cluster as being responsible for SQS1 production, the cluster contains a gene encoding a putative squalene synthase (SS) R6, suggesting a likely mechanism for self-resistance. The polypeptide is Probable copper-dependent oxygenase M1 (Phoma sp. (strain ATCC 20986 / MF5453)).